A 360-amino-acid chain; its full sequence is Mitogen-activated protein kinase 14 (360 aa).

At Ser2 the chain carries N-acetylserine. Phosphoserine is present on Ser2. Thr16 is modified (phosphothreonine). Residues 24–308 (YQNLSPVGSG…AAQALAHAYF (285 aa)) form the Protein kinase domain. Residues 30 to 38 (VGSGAYGSV) and Lys53 each bind ATP. Lys53 carries the N6-acetyllysine modification. Asp150 acts as the Proton acceptor in catalysis. Lys152 is modified (N6-acetyllysine). Position 180 is a phosphothreonine; by MAP2K3, MAP2K4, MAP2K6 and autocatalysis (Thr180). The short motif at 180–182 (TGY) is the TXY element. Tyr182 is modified (phosphotyrosine; by MAP2K3, MAP2K4, MAP2K6 and autocatalysis). Thr263 is modified (phosphothreonine). Tyr323 carries the post-translational modification Phosphotyrosine; by ZAP70.

Belongs to the protein kinase superfamily. CMGC Ser/Thr protein kinase family. MAP kinase subfamily. Component of a signaling complex containing at least AKAP13, PKN1, MAPK14, ZAK and MAP2K3. Within this complex, AKAP13 interacts directly with PKN1, which in turn recruits MAPK14, MAP2K3 and ZAK. Binds to a kinase interaction motif within the protein tyrosine phosphatase, PTPRR. This interaction retains MAPK14 in the cytoplasm and prevents nuclear accumulation. Interacts with SPAG9 and GADD45A. Interacts with CDC25B, CDC25C, DUSP1, DUSP10, DUSP16, NP60, SUPT20H and TAB1. Interacts with casein kinase II subunits CSNK2A1 and CSNK2B. Interacts with PPM1D. Interacts with CDK5RAP3; recruits PPM1D to MAPK14 and may regulate its dephosphorylation. Interacts with DUSP2; this interaction does not lead to catalytic activation of DUSP2 and dephosphrylation of MAPK14. It depends on Mg(2+) as a cofactor. In terms of processing, dually phosphorylated on Thr-180 and Tyr-182 by the MAP2Ks MAP2K3/MKK3, MAP2K4/MKK4 and MAP2K6/MKK6 in response to inflammatory citokines, environmental stress or growth factors, which activates the enzyme. Dual phosphorylation can also be mediated by TAB1-mediated autophosphorylation. TCR engagement in T-cells also leads to Tyr-323 phosphorylation by ZAP70. Dephosphorylated and inactivated by DUPS1, DUSP10 and DUSP16. PPM1D also mediates dephosphorylation and inactivation of MAPK14. Acetylated at Lys-53 and Lys-152 by KAT2B and EP300. Acetylation at Lys-53 increases the affinity for ATP and enhances kinase activity. Lys-53 and Lys-152 are deacetylated by HDAC3. Post-translationally, ubiquitinated. Ubiquitination leads to degradation by the proteasome pathway.

It is found in the cytoplasm. The protein resides in the nucleus. It carries out the reaction L-seryl-[protein] + ATP = O-phospho-L-seryl-[protein] + ADP + H(+). The catalysed reaction is L-threonyl-[protein] + ATP = O-phospho-L-threonyl-[protein] + ADP + H(+). Its activity is regulated as follows. Activated by cell stresses such as DNA damage, heat shock, osmotic shock, anisomycin and sodium arsenite, as well as pro-inflammatory stimuli such as bacterial lipopolysaccharide (LPS) and interleukin-1. Activation occurs through dual phosphorylation of Thr-180 and Tyr-182 by either of two dual specificity kinases, MAP2K3/MKK3 or MAP2K6/MKK6, and potentially also MAP2K4/MKK4, as well as by TAB1-mediated autophosphorylation. MAPK14 phosphorylated on both Thr-180 and Tyr-182 is 10-20-fold more active than MAPK14 phosphorylated only on Thr-180, whereas MAPK14 phosphorylated on Tyr-182 alone is inactive. whereas Thr-180 is necessary for catalysis, Tyr-182 may be required for auto-activation and substrate recognition. Phosphorylated at Tyr-323 by ZAP70 in an alternative activation pathway in response to TCR signaling in T-cells. This alternative pathway is inhibited by GADD45A. Inhibited by dual specificity phosphatases, such as DUSP1, DUSP10, and DUSP16. Specifically inhibited by the binding of pyridinyl-imidazole compounds, which are cytokine-suppressive anti-inflammatory drugs (CSAID). SB203580 is an inhibitor of MAPK14. Functionally, serine/threonine kinase which acts as an essential component of the MAP kinase signal transduction pathway. MAPK14 is one of the four p38 MAPKs which play an important role in the cascades of cellular responses evoked by extracellular stimuli such as pro-inflammatory cytokines or physical stress leading to direct activation of transcription factors. Accordingly, p38 MAPKs phosphorylate a broad range of proteins and it has been estimated that they may have approximately 200 to 300 substrates each. Some of the targets are downstream kinases which are activated through phosphorylation and further phosphorylate additional targets. RPS6KA5/MSK1 and RPS6KA4/MSK2 can directly phosphorylate and activate transcription factors such as CREB1, ATF1, the NF-kappa-B isoform RELA/NFKB3, STAT1 and STAT3, but can also phosphorylate histone H3 and the nucleosomal protein HMGN1. RPS6KA5/MSK1 and RPS6KA4/MSK2 play important roles in the rapid induction of immediate-early genes in response to stress or mitogenic stimuli, either by inducing chromatin remodeling or by recruiting the transcription machinery. On the other hand, two other kinase targets, MAPKAPK2/MK2 and MAPKAPK3/MK3, participate in the control of gene expression mostly at the post-transcriptional level, by phosphorylating ZFP36 (tristetraprolin) and ELAVL1, and by regulating EEF2K, which is important for the elongation of mRNA during translation. MKNK1/MNK1 and MKNK2/MNK2, two other kinases activated by p38 MAPKs, regulate protein synthesis by phosphorylating the initiation factor EIF4E2. MAPK14 also interacts with casein kinase II, leading to its activation through autophosphorylation and further phosphorylation of TP53/p53. In the cytoplasm, the p38 MAPK pathway is an important regulator of protein turnover. For example, CFLAR is an inhibitor of TNF-induced apoptosis whose proteasome-mediated degradation is regulated by p38 MAPK phosphorylation. In a similar way, MAPK14 phosphorylates the ubiquitin ligase SIAH2, regulating its activity towards EGLN3. MAPK14 may also inhibit the lysosomal degradation pathway of autophagy by interfering with the intracellular trafficking of the transmembrane protein ATG9. Another function of MAPK14 is to regulate the endocytosis of membrane receptors by different mechanisms that impinge on the small GTPase RAB5A. In addition, clathrin-mediated EGFR internalization induced by inflammatory cytokines and UV irradiation depends on MAPK14-mediated phosphorylation of EGFR itself as well as of RAB5A effectors. Ectodomain shedding of transmembrane proteins is regulated by p38 MAPKs as well. In response to inflammatory stimuli, p38 MAPKs phosphorylate the membrane-associated metalloprotease ADAM17. Such phosphorylation is required for ADAM17-mediated ectodomain shedding of TGF-alpha family ligands, which results in the activation of EGFR signaling and cell proliferation. Another p38 MAPK substrate is FGFR1. FGFR1 can be translocated from the extracellular space into the cytosol and nucleus of target cells, and regulates processes such as rRNA synthesis and cell growth. FGFR1 translocation requires p38 MAPK activation. In the nucleus, many transcription factors are phosphorylated and activated by p38 MAPKs in response to different stimuli. Classical examples include ATF1, ATF2, ATF6, ELK1, PTPRH, DDIT3, TP53/p53 and MEF2C and MEF2A. The p38 MAPKs are emerging as important modulators of gene expression by regulating chromatin modifiers and remodelers. The promoters of several genes involved in the inflammatory response, such as IL6, IL8 and IL12B, display a p38 MAPK-dependent enrichment of histone H3 phosphorylation on 'Ser-10' (H3S10ph) in LPS-stimulated myeloid cells. This phosphorylation enhances the accessibility of the cryptic NF-kappa-B-binding sites marking promoters for increased NF-kappa-B recruitment. Phosphorylates CDC25B and CDC25C which is required for binding to 14-3-3 proteins and leads to initiation of a G2 delay after ultraviolet radiation. Phosphorylates TIAR following DNA damage, releasing TIAR from GADD45A mRNA and preventing mRNA degradation. The p38 MAPKs may also have kinase-independent roles, which are thought to be due to the binding to targets in the absence of phosphorylation. Protein O-Glc-N-acylation catalyzed by the OGT is regulated by MAPK14, and, although OGT does not seem to be phosphorylated by MAPK14, their interaction increases upon MAPK14 activation induced by glucose deprivation. This interaction may regulate OGT activity by recruiting it to specific targets such as neurofilament H, stimulating its O-Glc-N-acylation. Required in mid-fetal development for the growth of embryo-derived blood vessels in the labyrinth layer of the placenta. Also plays an essential role in developmental and stress-induced erythropoiesis, through regulation of EPO gene expression. Phosphorylates S100A9 at 'Thr-113'. This is Mitogen-activated protein kinase 14 from Canis lupus familiaris (Dog).